We begin with the raw amino-acid sequence, 107 residues long: Thiosulfate sulfurtransferase GlpE (107 aa).

Residues K19 to K107 enclose the Rhodanese domain. The active-site Cysteine persulfide intermediate is C67.

Belongs to the GlpE family.

The protein resides in the cytoplasm. The catalysed reaction is thiosulfate + hydrogen cyanide = thiocyanate + sulfite + 2 H(+). It catalyses the reaction thiosulfate + [thioredoxin]-dithiol = [thioredoxin]-disulfide + hydrogen sulfide + sulfite + 2 H(+). Its function is as follows. Transferase that catalyzes the transfer of sulfur from thiosulfate to thiophilic acceptors such as cyanide or dithiols. May function in a CysM-independent thiosulfate assimilation pathway by catalyzing the conversion of thiosulfate to sulfite, which can then be used for L-cysteine biosynthesis. The protein is Thiosulfate sulfurtransferase GlpE of Aliivibrio salmonicida (strain LFI1238) (Vibrio salmonicida (strain LFI1238)).